Reading from the N-terminus, the 302-residue chain is Bifunctional protein FolD (302 aa).

NADP(+) is bound by residues 171-173 (GRS), Ser-196, and Ile-237.

This sequence belongs to the tetrahydrofolate dehydrogenase/cyclohydrolase family. In terms of assembly, homodimer.

It carries out the reaction (6R)-5,10-methylene-5,6,7,8-tetrahydrofolate + NADP(+) = (6R)-5,10-methenyltetrahydrofolate + NADPH. The enzyme catalyses (6R)-5,10-methenyltetrahydrofolate + H2O = (6R)-10-formyltetrahydrofolate + H(+). It participates in one-carbon metabolism; tetrahydrofolate interconversion. Catalyzes the oxidation of 5,10-methylenetetrahydrofolate to 5,10-methenyltetrahydrofolate and then the hydrolysis of 5,10-methenyltetrahydrofolate to 10-formyltetrahydrofolate. The chain is Bifunctional protein FolD from Sphingopyxis alaskensis (strain DSM 13593 / LMG 18877 / RB2256) (Sphingomonas alaskensis).